Consider the following 146-residue polypeptide: Pseudoazurin (146 aa).

The N-terminal stretch at 1-23 (MRNIAIKFAAAGILAMLAAPALA) is a signal peptide. In terms of domain architecture, Plastocyanin-like spans 28–116 (VHMLNKGAEG…MGMIALIAVG (89 aa)). Cu cation contacts are provided by H63, C101, H104, and M109.

Cu cation is required as a cofactor.

Its subcellular location is the periplasm. Functionally, this soluble electron transfer copper protein is required for the inactivation of copper-containing nitrite reductase in the presence of oxygen. Serves as a direct electron donor to the nitrite reductase. The sequence is that of Pseudoazurin from Alcaligenes faecalis.